The chain runs to 1362 residues: DNA-directed RNA polymerase subunit beta (1362 aa).

The protein belongs to the RNA polymerase beta chain family. The RNAP catalytic core consists of 2 alpha, 1 beta, 1 beta' and 1 omega subunit. When a sigma factor is associated with the core the holoenzyme is formed, which can initiate transcription.

The enzyme catalyses RNA(n) + a ribonucleoside 5'-triphosphate = RNA(n+1) + diphosphate. Its function is as follows. DNA-dependent RNA polymerase catalyzes the transcription of DNA into RNA using the four ribonucleoside triphosphates as substrates. The sequence is that of DNA-directed RNA polymerase subunit beta from Parvibaculum lavamentivorans (strain DS-1 / DSM 13023 / NCIMB 13966).